Consider the following 336-residue polypeptide: Inositol 2-dehydrogenase (336 aa).

The protein belongs to the Gfo/Idh/MocA family. As to quaternary structure, homotetramer.

The catalysed reaction is myo-inositol + NAD(+) = scyllo-inosose + NADH + H(+). Involved in the oxidation of myo-inositol (MI) to 2-keto-myo-inositol (2KMI or 2-inosose). This chain is Inositol 2-dehydrogenase, found in Salmonella agona (strain SL483).